A 125-amino-acid chain; its full sequence is uncharacterized protein (125 aa).

Residues 7 to 29 traverse the membrane as a helical segment; it reads NCMFLYVYTDVCVRLCASIFYIM.

Its subcellular location is the membrane. This is an uncharacterized protein from Saccharomyces cerevisiae (strain ATCC 204508 / S288c) (Baker's yeast).